The primary structure comprises 855 residues: Sucrose synthase 7 (855 aa).

Residues 279-758 (SIFNIVIFSI…GLQRIYECYT (480 aa)) are GT-B glycosyltransferase.

This sequence belongs to the glycosyltransferase 1 family. Plant sucrose synthase subfamily. As to expression, predominantly expressed in roots, flowers and immature seeds.

The protein resides in the cytoplasm. It is found in the membrane. It carries out the reaction an NDP-alpha-D-glucose + D-fructose = a ribonucleoside 5'-diphosphate + sucrose + H(+). Its function is as follows. Sucrose-cleaving enzyme that provides UDP-glucose and fructose for various metabolic pathways. The sequence is that of Sucrose synthase 7 (SUS7) from Oryza sativa subsp. japonica (Rice).